The chain runs to 564 residues: CTP synthase (564 aa).

An amidoligase domain region spans residues 1–272 (MARPKNVKHI…DIRVLKKLGL (272 aa)). Ser18 contributes to the CTP binding site. UTP is bound at residue Ser18. 19–24 (SLGKGI) is an ATP binding site. Residue Tyr59 participates in L-glutamine binding. An ATP-binding site is contributed by Asp76. Residues Asp76 and Glu146 each contribute to the Mg(2+) site. Residues 153 to 155 (DIE), 193 to 198 (KTKPTQ), and Lys229 contribute to the CTP site. UTP is bound by residues 193-198 (KTKPTQ) and Lys229. Residues 299 to 543 (TIAICGKYTE…VAAAKEFAHG (245 aa)) form the Glutamine amidotransferase type-1 domain. An L-glutamine-binding site is contributed by Gly363. The Nucleophile; for glutamine hydrolysis role is filled by Cys390. L-glutamine-binding positions include 391 to 394 (LGMQ), Glu414, and Arg471. Active-site residues include His516 and Glu518.

It belongs to the CTP synthase family. In terms of assembly, homotetramer.

It catalyses the reaction UTP + L-glutamine + ATP + H2O = CTP + L-glutamate + ADP + phosphate + 2 H(+). The catalysed reaction is L-glutamine + H2O = L-glutamate + NH4(+). It carries out the reaction UTP + NH4(+) + ATP = CTP + ADP + phosphate + 2 H(+). The protein operates within pyrimidine metabolism; CTP biosynthesis via de novo pathway; CTP from UDP: step 2/2. Its activity is regulated as follows. Allosterically activated by GTP, when glutamine is the substrate; GTP has no effect on the reaction when ammonia is the substrate. The allosteric effector GTP functions by stabilizing the protein conformation that binds the tetrahedral intermediate(s) formed during glutamine hydrolysis. Inhibited by the product CTP, via allosteric rather than competitive inhibition. Its function is as follows. Catalyzes the ATP-dependent amination of UTP to CTP with either L-glutamine or ammonia as the source of nitrogen. Regulates intracellular CTP levels through interactions with the four ribonucleotide triphosphates. In Prosthecochloris aestuarii (strain DSM 271 / SK 413), this protein is CTP synthase.